The following is a 1525-amino-acid chain: Receptor-type guanylate cyclase Gyc76C (1525 aa).

Positions 1-19 (MTRWPFNLLLLLSVAVRDC) are cleaved as a signal peptide. Residues 20–493 (SNHRTVLTVG…KKDDTHYTST (474 aa)) are Extracellular-facing. N-linked (GlcNAc...) asparagine glycans are attached at residues N74, N184, N222, N338, N383, N394, N416, N428, and N458. A helical membrane pass occupies residues 494–514 (VAAVVLGVLLFCSGVITMSIY). Residues 515-1525 (RKWKIELEIE…AAARDRESIV (1011 aa)) are Cytoplasmic-facing. Residues 547–824 (PSKVSLMSAQ…SVIRNRLKKM (278 aa)) enclose the Protein kinase domain. Residues 553–561 (MSAQSYGSR) and K581 contribute to the ATP site. Positions 896–1026 (TIYFSDIVGF…DTVNTASRME (131 aa)) constitute a Guanylate cyclase domain. 3 residues coordinate Mg(2+): D901, I902, and D945. Disordered regions lie at residues 1122 to 1168 (GSRR…NGLG), 1192 to 1217 (ETNE…LVRQ), and 1256 to 1308 (ESRS…VHSS). Positions 1147-1162 (ESPRMVSKRDRDRERP) are enriched in basic and acidic residues. A compositionally biased stretch (gly residues) spans 1202–1212 (GGSGGVSGSGS). The span at 1282–1308 (LSKNNSRSLDTGVSLISGNPNGEVHSS) shows a compositional bias: polar residues.

The protein belongs to the adenylyl cyclase class-4/guanylyl cyclase family. In terms of assembly, interacts with the semaphorin 1A receptor PlexA; PlexA enhances Gyc76C catalytic activity. Interacts with the PDZ domain-containing protein kermit; kermit increases cell surface expression of Gyc76C. In terms of tissue distribution, in the adult, widely distributed in the head and thorax with highest levels in the optic lobe and central brain and expression also detected in the retina. Expressed at similar levels in adult head and body. In females, highly expressed in oocytes with lower levels in the digestive tract. In mid-embryogenesis, enriched in the circular visceral mesoderm that overlies the migrating salivary gland and in the fat body that underlies the gland but at background levels in the gland itself. In late embryogenesis, detected in the mature salivary gland, in the somatic body wall muscles and the tendon cells to which the muscles attach, and in the constricting midgut. Also expressed in migrating tracheal cells at mid-embryogenesis and in the developed trachea at the end of embryogenesis with enrichment in the apical domains.

Its subcellular location is the cell membrane. The catalysed reaction is GTP = 3',5'-cyclic GMP + diphosphate. Functionally, guanylate cyclase involved in the production of the second messenger cGMP. Acts as a receptor for the NPLP1-4 peptide and modulates the innate immune IMD pathway in response to salt stress by inducing nuclear translocation of NF-kappa-B protein Rel which leads to increased expression of the antimicrobial peptide diptericin. Plays a role in Sema-1a-mediated axon repulsion which is required for the correct establishment of neuromuscular connectivity. Required in developing embryonic somatic muscle for correct patterning of ventral and lateral muscles and for localization of integrin beta-ps at developing dorsal muscle myotendinous junctions. Required for invagination, migration and lumen shape of the embryonic salivary gland by regulating the localization of the integrin-binding protein rhea/Talin to the visceral mesoderm surrounding the gland and maintaining the laminin matrix. Required in the developing wing to regulate extracellular matrix (ECM) organization by activating the cGMP-dependent protein kinase For which represses the activity of matrix metalloproteases such as Mmp2 and decreases ECM matrix reorganization. This Drosophila melanogaster (Fruit fly) protein is Receptor-type guanylate cyclase Gyc76C.